Here is a 218-residue protein sequence, read N- to C-terminus: uncharacterized protein (218 aa).

Residues 154-199 form an RING-type zinc finger; that stretch reads CFICTMEYSRTDKNLHPIILNCGHNLCRSCINKLTGNGIVKCPFDR.

This is an uncharacterized protein from Caenorhabditis elegans.